The primary structure comprises 1240 residues: DNA excision repair protein ERCC-6-like (1240 aa).

A Phosphoserine modification is found at Ser-14. A TPR 1 repeat occupies 21–54; sequence YLRYVQEAKEAAKNGDLEESLKLFNLAKDIFPTK. Positions 110 to 278 constitute a Helicase ATP-binding domain; the sequence is SLYKDGRKGG…WSLFDFACQG (169 aa). ATP is bound at residue 123–130; the sequence is DDMGLGKT. Positions 229-232 match the DEAH box motif; it reads DEAH. The Helicase C-terminal domain maps to 467–631; the sequence is FLMSLLERLQ…FTKQELKELF (165 aa). Residues 736 to 760 are disordered; it reads FPSQQKKKGTEFNKPQPQPSRLLTK. Residues 748 to 760 show a composition bias toward polar residues; that stretch reads NKPQPQPSRLLTK. Phosphoserine occurs at positions 755 and 773. The tract at residues 778–813 is disordered; the sequence is DQSAESEPQEHSEVHDVTSLQGSHHFNSTSDAGTIA. The segment covering 795 to 809 has biased composition (polar residues); sequence TSLQGSHHFNSTSDA. Ser-821 carries the phosphoserine modification. The interval 845–879 is disordered; it reads QKKGLQASPGQEAPSENLGSFHYLPRESSKASLGP. 4 positions are modified to phosphoserine: Ser-966, Ser-998, Ser-1001, and Ser-1021. The segment at 974–1085 is disordered; the sequence is KEKSLQSPAA…EVNTSLHSRR (112 aa). A compositionally biased stretch (polar residues) spans 978–998; sequence LQSPAANSRAKSALTLSLDSS. Positions 1049 to 1065 are enriched in polar residues; that stretch reads SVKQFDASTPQSGSNPS. Thr-1057 is modified (phosphothreonine). Residues Ser-1092 and Ser-1112 each carry the phosphoserine modification. The span at 1104–1117 shows a compositional bias: acidic residues; it reads MEERLDNSSEEESE. Residues 1104–1185 form a disordered region; that stretch reads MEERLDNSSE…MPDPPQDLAV (82 aa). Residues 1135–1165 show a composition bias toward polar residues; sequence EQPSGATLASGNKSSNLTMSEPTSPAPQSSP. Ser-1172 carries the post-translational modification Phosphoserine. The stretch at 1191–1224 is one TPR 2 repeat; that stretch reads YESLVARGKELKECGKIQEALNCLVKALDIKSAD.

Belongs to the SNF2/RAD54 helicase family. As to quaternary structure, interacts with PLK1, which phosphorylates it. Both proteins are mutually dependent on each other for correct subcellular localization. Interacts (via N-terminal TPR repeat) with BEND3 (via BEN domains 1 and 3); the interaction is direct. In terms of processing, phosphorylation by PLK1 prevents the association with chromosome arms and restricts its localization to the kinetochore-centromere region. As to expression, expressed mainly in the neural tube and heart of 10.5 dpc embryo. Significantly down-regulated after alcohol exposure in embryonic brain and heart, but not in embryonic kidney, liver, or lung.

Its subcellular location is the chromosome. The protein resides in the centromere. It localises to the kinetochore. It catalyses the reaction ATP + H2O = ADP + phosphate + H(+). Functionally, DNA helicase that acts as a tension sensor that associates with catenated DNA which is stretched under tension until it is resolved during anaphase. Functions as ATP-dependent DNA translocase. Can promote Holliday junction branch migration (in vitro). This is DNA excision repair protein ERCC-6-like (Ercc6l) from Mus musculus (Mouse).